The chain runs to 195 residues: CASP-like protein 1B1 (195 aa).

Topologically, residues 1 to 25 (MDLEKGKKPSEQAAACRIMQVKDKL) are cytoplasmic. A helical transmembrane segment spans residues 26–46 (ITLQPVVRACVFLATAVAAVI). Topologically, residues 47–78 (MGLNKQSYTTVVAIVGTRPVTQTFTAKFKDTP) are extracellular. A helical transmembrane segment spans residues 79–99 (AFVFFVIANAIASGYNLMVLV). The Cytoplasmic segment spans residues 100–114 (TRRILQRRAQSLSVH). A helical transmembrane segment spans residues 115–135 (LLDMVILTLLATGSATAASMA). The Extracellular portion of the chain corresponds to 136–160 (QLGKNGNLHARWNPICDKFGSFCNH). The chain crosses the membrane as a helical span at residues 161 to 181 (GGIALMSSFIGVALMLALNLL). The Cytoplasmic portion of the chain corresponds to 182-195 (SAAANSPRSNVTGQ).

This sequence belongs to the Casparian strip membrane proteins (CASP) family. As to quaternary structure, homodimer and heterodimers.

It is found in the cell membrane. In Oryza sativa subsp. indica (Rice), this protein is CASP-like protein 1B1.